The sequence spans 426 residues: Gamma-glutamyl phosphate reductase (426 aa).

This sequence belongs to the gamma-glutamyl phosphate reductase family.

Its subcellular location is the cytoplasm. The catalysed reaction is L-glutamate 5-semialdehyde + phosphate + NADP(+) = L-glutamyl 5-phosphate + NADPH + H(+). Its pathway is amino-acid biosynthesis; L-proline biosynthesis; L-glutamate 5-semialdehyde from L-glutamate: step 2/2. Its function is as follows. Catalyzes the NADPH-dependent reduction of L-glutamate 5-phosphate into L-glutamate 5-semialdehyde and phosphate. The product spontaneously undergoes cyclization to form 1-pyrroline-5-carboxylate. This Ralstonia pickettii (strain 12J) protein is Gamma-glutamyl phosphate reductase.